Here is a 343-residue protein sequence, read N- to C-terminus: MKKTIVALAVAAVAATSANAATVYNQDGTKVDVNGSVRLILKKEKNERGDLVDNGSRVSFKASHDLGEGLSALAYAELRFSKNEKVEVKDAQNQQVVRKYEVERIGNDVHVKRLYAGFAYEGLGTLTFGNQLTIGDDVGVSDYTYFLGGINNLLSSGEKAINFKSAEFNGFTFGGAYVFSADADKQAPRDGRGFVVAGLYNRKMGDVGFALEAGYSQKYVTAAAKQEKEKAFMVGTELSYAGLALGVDYAQSKVTNVEGKKRALEVGLNYDINDKAKVYTDLIWAKEGPKGATTRDRSIILGAGYKLHKQVETFVEGGWGREKDANGVTTKDNKVGVGLRVHF.

Positions 1-20 are cleaved as a signal peptide; it reads MKKTIVALAVAAVAATSANA.

In terms of assembly, disulfide bond interactions within and between MOMP molecules and other components form high molecular-weight oligomers.

It is found in the cell outer membrane. Structural rigidity of the outer membrane of elementary bodies and porin forming, permitting diffusion of solutes through the intracellular reticulate body membrane. The polypeptide is Major outer membrane protein (ompH) (Pasteurella multocida).